Reading from the N-terminus, the 143-residue chain is Hemoglobin anodic subunit alpha (143 aa).

Ser-2 bears the N-acetylserine mark. One can recognise a Globin domain in the interval 2 to 143 (SLSAKDMAVV…FTLALSERYR (142 aa)). Position 60 (His-60) interacts with O2. His-89 lines the heme b pocket.

The protein belongs to the globin family. In terms of assembly, heterotetramer of two alpha chains and two beta chains. As to expression, red blood cells.

Functionally, involved in oxygen transport from gills to the various peripheral tissues. The polypeptide is Hemoglobin anodic subunit alpha (hba) (Anguilla anguilla (European freshwater eel)).